Consider the following 421-residue polypeptide: Probable tRNA N6-adenosine threonylcarbamoyltransferase, mitochondrial (421 aa).

The transit peptide at 1–22 directs the protein to the mitochondrion; the sequence is MNIPKILNNNLVLKRIFCRNYS. Positions 133 and 137 each coordinate a divalent metal cation. Substrate-binding positions include 156 to 160, D189, G208, E212, 308 to 309, and T336; these read LLSGG and AN. D337 contributes to the a divalent metal cation binding site.

This sequence belongs to the KAE1 / TsaD family. In terms of assembly, homodimer. The cofactor is a divalent metal cation.

It is found in the mitochondrion. It catalyses the reaction L-threonylcarbamoyladenylate + adenosine(37) in tRNA = N(6)-L-threonylcarbamoyladenosine(37) in tRNA + AMP + H(+). Required for the formation of a threonylcarbamoyl group on adenosine at position 37 (t(6)A37) in mitochondrial tRNAs that read codons beginning with adenine. Probably involved in the transfer of the threonylcarbamoyl moiety of threonylcarbamoyl-AMP (TC-AMP) to the N6 group of A37. Involved in mitochondrial genome maintenance. This is Probable tRNA N6-adenosine threonylcarbamoyltransferase, mitochondrial from Caenorhabditis elegans.